The chain runs to 340 residues: Glycerol-3-phosphate dehydrogenase [NAD(P)+] (340 aa).

Ser14, Phe15, Arg35, and Lys108 together coordinate NADPH. Sn-glycerol 3-phosphate contacts are provided by Lys108 and Gly136. An NADPH-binding site is contributed by Ala140. Sn-glycerol 3-phosphate is bound by residues Lys191, Asp244, Ser254, Arg255, and Asn256. Residue Lys191 is the Proton acceptor of the active site. Residue Arg255 coordinates NADPH. NADPH contacts are provided by Val279 and Glu281.

It belongs to the NAD-dependent glycerol-3-phosphate dehydrogenase family.

It is found in the cytoplasm. The catalysed reaction is sn-glycerol 3-phosphate + NAD(+) = dihydroxyacetone phosphate + NADH + H(+). It catalyses the reaction sn-glycerol 3-phosphate + NADP(+) = dihydroxyacetone phosphate + NADPH + H(+). It functions in the pathway membrane lipid metabolism; glycerophospholipid metabolism. Its function is as follows. Catalyzes the reduction of the glycolytic intermediate dihydroxyacetone phosphate (DHAP) to sn-glycerol 3-phosphate (G3P), the key precursor for phospholipid synthesis. The sequence is that of Glycerol-3-phosphate dehydrogenase [NAD(P)+] from Ectopseudomonas mendocina (strain ymp) (Pseudomonas mendocina).